A 317-amino-acid polypeptide reads, in one-letter code: Thymidylate synthase (317 aa).

DUMP-binding positions include R24 and 179–180 (RR). C199 (nucleophile) is an active-site residue. DUMP contacts are provided by residues 219–222 (RSAD), N230, and 260–262 (HIY). D222 serves as a coordination point for (6R)-5,10-methylene-5,6,7,8-tetrahydrofolate. Residue A316 participates in (6R)-5,10-methylene-5,6,7,8-tetrahydrofolate binding.

Belongs to the thymidylate synthase family. Bacterial-type ThyA subfamily. In terms of assembly, homodimer.

It localises to the cytoplasm. It carries out the reaction dUMP + (6R)-5,10-methylene-5,6,7,8-tetrahydrofolate = 7,8-dihydrofolate + dTMP. It participates in pyrimidine metabolism; dTTP biosynthesis. In terms of biological role, catalyzes the reductive methylation of 2'-deoxyuridine-5'-monophosphate (dUMP) to 2'-deoxythymidine-5'-monophosphate (dTMP) while utilizing 5,10-methylenetetrahydrofolate (mTHF) as the methyl donor and reductant in the reaction, yielding dihydrofolate (DHF) as a by-product. This enzymatic reaction provides an intracellular de novo source of dTMP, an essential precursor for DNA biosynthesis. The sequence is that of Thymidylate synthase from Oceanobacillus iheyensis (strain DSM 14371 / CIP 107618 / JCM 11309 / KCTC 3954 / HTE831).